We begin with the raw amino-acid sequence, 599 residues long: Elongation factor 4 (599 aa).

The tr-type G domain maps to 5–187; it reads SHIRNFSIIA…RLVHTIPAPV (183 aa). Residues 17–22 and 134–137 each bind GTP; these read DHGKST and NKMD.

Belongs to the TRAFAC class translation factor GTPase superfamily. Classic translation factor GTPase family. LepA subfamily.

It is found in the cell inner membrane. It catalyses the reaction GTP + H2O = GDP + phosphate + H(+). Required for accurate and efficient protein synthesis under certain stress conditions. May act as a fidelity factor of the translation reaction, by catalyzing a one-codon backward translocation of tRNAs on improperly translocated ribosomes. Back-translocation proceeds from a post-translocation (POST) complex to a pre-translocation (PRE) complex, thus giving elongation factor G a second chance to translocate the tRNAs correctly. Binds to ribosomes in a GTP-dependent manner. The protein is Elongation factor 4 of Pseudomonas putida (strain W619).